The sequence spans 205 residues: Golgi apparatus membrane protein TVP23 homolog B (205 aa).

Residue Met1 is modified to N-acetylmethionine. The disordered stretch occupies residues 1 to 21; sequence MLQQDSNDDTEDVSLFDAEEE. 4 helical membrane passes run 34 to 53, 54 to 72, 126 to 146, and 152 to 172; these read PVASFFHLFFRVSAIIVYLL, CELLSSSFITCMVTIILLL, IFWLGLIACPVLWVIFAFSAL, and KWLAVVIMGVVLQGANLYGYI.

It belongs to the TVP23 family.

It localises to the membrane. This Pongo abelii (Sumatran orangutan) protein is Golgi apparatus membrane protein TVP23 homolog B (TVP23B).